We begin with the raw amino-acid sequence, 297 residues long: tRNA pseudouridine synthase B (297 aa).

Asp44 serves as the catalytic Nucleophile.

The protein belongs to the pseudouridine synthase TruB family. Type 1 subfamily.

It carries out the reaction uridine(55) in tRNA = pseudouridine(55) in tRNA. Its function is as follows. Responsible for synthesis of pseudouridine from uracil-55 in the psi GC loop of transfer RNAs. The polypeptide is tRNA pseudouridine synthase B (Corynebacterium glutamicum (strain R)).